The chain runs to 275 residues: 3-methyl-2-oxobutanoate hydroxymethyltransferase (275 aa).

Mg(2+) contacts are provided by D49 and D88. Residues 49 to 50, D88, and K118 each bind 3-methyl-2-oxobutanoate; that span reads DS. A Mg(2+)-binding site is contributed by E120. E187 serves as the catalytic Proton acceptor.

It belongs to the PanB family. In terms of assembly, homodecamer; pentamer of dimers. Mg(2+) is required as a cofactor.

The protein localises to the cytoplasm. The enzyme catalyses 3-methyl-2-oxobutanoate + (6R)-5,10-methylene-5,6,7,8-tetrahydrofolate + H2O = 2-dehydropantoate + (6S)-5,6,7,8-tetrahydrofolate. It participates in cofactor biosynthesis; (R)-pantothenate biosynthesis; (R)-pantoate from 3-methyl-2-oxobutanoate: step 1/2. Functionally, catalyzes the reversible reaction in which hydroxymethyl group from 5,10-methylenetetrahydrofolate is transferred onto alpha-ketoisovalerate to form ketopantoate. The sequence is that of 3-methyl-2-oxobutanoate hydroxymethyltransferase from Brucella suis (strain ATCC 23445 / NCTC 10510).